The sequence spans 299 residues: Sulfate adenylyltransferase subunit 2 (299 aa).

This sequence belongs to the PAPS reductase family. CysD subfamily. Sulfate-activating enzymes, NodP and NodQ, may be physically associated.

The enzyme catalyses sulfate + ATP + H(+) = adenosine 5'-phosphosulfate + diphosphate. Its function is as follows. Proposed to provide activated sulfate for transfer to nod factor. The sequence is that of Sulfate adenylyltransferase subunit 2 (nodP) from Rhizobium tropici.